Here is a 249-residue protein sequence, read N- to C-terminus: Flavin-dependent thymidylate synthase (249 aa).

The ThyX domain maps to V8 to S225. Residues S62, R86–R88, and Q94 each bind FAD. Residues Q83 to R86, Q94 to R98, and R164 each bind dUMP. The ThyX motif signature appears at R86–S96. Residues N180–R182 and N186 each bind FAD. R191 serves as a coordination point for dUMP. R191 serves as the catalytic Involved in ionization of N3 of dUMP, leading to its activation.

It belongs to the thymidylate synthase ThyX family. In terms of assembly, homotetramer. FAD serves as cofactor.

The catalysed reaction is dUMP + (6R)-5,10-methylene-5,6,7,8-tetrahydrofolate + NADPH + H(+) = dTMP + (6S)-5,6,7,8-tetrahydrofolate + NADP(+). It functions in the pathway pyrimidine metabolism; dTTP biosynthesis. Functionally, catalyzes the reductive methylation of 2'-deoxyuridine-5'-monophosphate (dUMP) to 2'-deoxythymidine-5'-monophosphate (dTMP) while utilizing 5,10-methylenetetrahydrofolate (mTHF) as the methyl donor, and NADPH and FADH(2) as the reductant. In Clostridium tetani (strain Massachusetts / E88), this protein is Flavin-dependent thymidylate synthase.